A 150-amino-acid chain; its full sequence is Large ribosomal subunit protein bL9 (150 aa).

This sequence belongs to the bacterial ribosomal protein bL9 family.

Functionally, binds to the 23S rRNA. This Colwellia psychrerythraea (strain 34H / ATCC BAA-681) (Vibrio psychroerythus) protein is Large ribosomal subunit protein bL9.